Here is a 340-residue protein sequence, read N- to C-terminus: MTSLIGTHSGKFHCDEAFACFMLKQLPQFKDHSILRTRDAAQLEKCDIIVDVGGIFDHSKQRYDHHQRGFTDTMRTLEKLNFDTKLSSAGLVYAHYGREVINQILGGNVSSSMIDLFYHRLYEQFVESIDAIDNGISQYDGVPRYHSSGNLSSRTGQFNSHWNEPENDADERFQQAMQFIGEEFSRSVKYLANVWWPAREIIEAAVDKRFEIDASGRIILIENGGCPWKEHFFDIEVEKNIADDNITYILFSDSTNASWRVQAIPVDKMSSFENRMPLPAAWRGLRDDDLSKESGIPGGVFVHISGFIGGNLTREGAIAMARKALEIGEENPVKKAKLGN.

It belongs to the MYG1 family.

This is MYG1 protein C27H6.8 from Caenorhabditis elegans.